The chain runs to 297 residues: ER membrane protein complex subunit 2 (297 aa).

Position 2 is an N-acetylalanine (Ala-2). TPR repeat units follow at residues 87-120 (HRVK…DPTN), 155-188 (QEAW…NPHN), and 192-225 (CQQY…NNRN). Lys-255 is subject to N6-acetyllysine.

The protein belongs to the EMC2 family. Component of the ER membrane protein complex (EMC). Interacts with WNK1 (via amphipathic alpha-helix region); promoting the ER membrane protein complex assembly by preventing EMC2 ubiquitination. In terms of processing, ubiquitinated when soluble in the cytoplasm, leading to its degradation by the proteasome. Interaction with EMC2 prevents its ubiquitination and degradation.

The protein localises to the endoplasmic reticulum membrane. Functionally, part of the endoplasmic reticulum membrane protein complex (EMC) that enables the energy-independent insertion into endoplasmic reticulum membranes of newly synthesized membrane proteins. Preferentially accommodates proteins with transmembrane domains that are weakly hydrophobic or contain destabilizing features such as charged and aromatic residues. Involved in the cotranslational insertion of multi-pass membrane proteins in which stop-transfer membrane-anchor sequences become ER membrane spanning helices. It is also required for the post-translational insertion of tail-anchored/TA proteins in endoplasmic reticulum membranes. By mediating the proper cotranslational insertion of N-terminal transmembrane domains in an N-exo topology, with translocated N-terminus in the lumen of the ER, controls the topology of multi-pass membrane proteins like the G protein-coupled receptors. By regulating the insertion of various proteins in membranes, it is indirectly involved in many cellular processes. This Pongo abelii (Sumatran orangutan) protein is ER membrane protein complex subunit 2.